The primary structure comprises 175 residues: Snake venom metalloproteinase BpMP-1 (175 aa).

The Peptidase M12B domain occupies 1–175 (YIELAVVADH…KHNPQCILNK (175 aa)). 2 residues coordinate Ca(2+): glutamate 3 and aspartate 74. Disulfide bonds link cysteine 98–cysteine 171, cysteine 131–cysteine 155, and cysteine 133–cysteine 138. Residue histidine 117 coordinates Zn(2+). The active site involves glutamate 118. Residues histidine 121 and histidine 127 each contribute to the Zn(2+) site. Positions 171 and 174 each coordinate Ca(2+).

It belongs to the venom metalloproteinase (M12B) family. P-I subfamily. As to quaternary structure, monomer. It depends on Zn(2+) as a cofactor. In terms of tissue distribution, expressed by the venom gland.

The protein resides in the secreted. Its activity is regulated as follows. Inhibited by EDTA, 1,10-phenanthroline and beta-mercaptoethanol. Not inhibited by the serine protease inhibitors aprotinin and benzamidin. Functionally, non-hemorrhagic snake venom zinc metalloprotease that hydrolyzes the Aalpha-chain of fibrinogen, more slowly the Bbeta-chain and shows no effect on the gamma chain. Has no coagulant activity on bovine plasma and fibrinogen. The protein is Snake venom metalloproteinase BpMP-1 of Bothrops pauloensis (Neuwied's lancehead).